Here is a 723-residue protein sequence, read N- to C-terminus: Pentatricopeptide repeat-containing protein At5g50280, chloroplastic (723 aa).

The transit peptide at 1–44 (MSMASSSLATQSFFSSFPLSHRLHFPVPYLLLRSSFFRKPLSLS) directs the protein to the chloroplast. The disordered stretch occupies residues 70 to 97 (IQQPENSTINSEESECEEEDDEEGDDFT). Over residues 81–97 (EESECEEEDDEEGDDFT) the composition is skewed to acidic residues. 11 PPR repeats span residues 272-306 (DVRL…NVYP), 307-342 (DNVT…GVKW), 343-377 (SQDV…GIRS), 378-412 (NTIV…GLKP), 413-447 (SAAT…GLEP), 448-483 (NVKS…GLKP), 484-518 (SSHS…GIKP), 519-553 (SVET…KIKG), 554-588 (TRIT…GLQP), 589-623 (SVMT…NLKP), and 624-658 (DSIT…GQVP). Positions 700 to 723 (TKGKKDEFWKYKTNRTTSPGRHRS) are disordered. The span at 713–723 (NRTTSPGRHRS) shows a compositional bias: polar residues.

This sequence belongs to the PPR family. P subfamily.

The protein resides in the plastid. Its subcellular location is the chloroplast. This Arabidopsis thaliana (Mouse-ear cress) protein is Pentatricopeptide repeat-containing protein At5g50280, chloroplastic (EMB1006).